We begin with the raw amino-acid sequence, 162 residues long: Ribosome maturation factor RimP (162 aa).

This sequence belongs to the RimP family.

It is found in the cytoplasm. Functionally, required for maturation of 30S ribosomal subunits. The protein is Ribosome maturation factor RimP of Leptospira interrogans serogroup Icterohaemorrhagiae serovar copenhageni (strain Fiocruz L1-130).